A 447-amino-acid polypeptide reads, in one-letter code: Protein disulfide-isomerase like 2-2 (447 aa).

Residues 1-26 (MERKMYKSTVFPICCLLFALFDRGNA) form the signal peptide. 2 consecutive Thioredoxin domains span residues 27 to 139 (LYGS…QIKA) and 161 to 275 (KKKS…QLES). Active-site nucleophile residues include cysteine 62 and cysteine 65. An intrachain disulfide couples cysteine 62 to cysteine 65. The interval 146-170 (DGKTSGTKNGGGSSEKKKSEPSASV) is disordered. Asparagine 173 is a glycosylation site (N-linked (GlcNAc...) asparagine). Catalysis depends on nucleophile residues cysteine 197 and cysteine 200. Cysteine 197 and cysteine 200 are oxidised to a cystine. Residues 444–447 (KDDL) carry the Prevents secretion from ER motif.

Belongs to the protein disulfide isomerase family. Widely expressed.

Its subcellular location is the endoplasmic reticulum lumen. The enzyme catalyses Catalyzes the rearrangement of -S-S- bonds in proteins.. Its function is as follows. Acts as a protein-folding catalyst that interacts with nascent polypeptides to catalyze the formation, isomerization, and reduction or oxidation of disulfide bonds. The protein is Protein disulfide-isomerase like 2-2 (PDIL2-2) of Arabidopsis thaliana (Mouse-ear cress).